The primary structure comprises 409 residues: Protein naked cuticle homolog 2-like (409 aa).

Gly2 carries N-myristoyl glycine lipidation. An EF-hand domain is found at 109-144 (AEDNRQEWVFTLYDFDNSGKVTKEDMSSLMHTIYDV). Asp122, Asp124, Ser126, Lys128, and Asp133 together coordinate Ca(2+). Disordered stretches follow at residues 166 to 224 (VTPE…YCVD), 243 to 315 (TSRF…RFPG), 346 to 367 (NHTH…IRSR), and 388 to 409 (RHEH…YHQT). Basic and acidic residues-rich tracts occupy residues 171–185 (AARR…RETS) and 193–224 (VRSE…YCVD). A compositionally biased stretch (low complexity) spans 247 to 268 (DSSSPDADQDPPSRSSHSQSRP). Residues 389 to 409 (HEHHHHHEHHHHHHYHHYHQT) are compositionally biased toward basic residues.

It belongs to the NKD family.

The protein localises to the cell membrane. It localises to the cytoplasm. In terms of biological role, cell autonomous antagonist of both the canonical and non-canonical Wnt signaling pathways. The sequence is that of Protein naked cuticle homolog 2-like (nkd2l) from Danio rerio (Zebrafish).